The primary structure comprises 642 residues: Sodium-dependent phosphate transport protein 2A (642 aa).

The Cytoplasmic segment spans residues 1 to 106 (MISYGEQLSS…LRRTAMTLLK (106 aa)). Phosphoserine occurs at positions 14 and 37. Residues 107-128 (LPLMVTFLYLFVCSLDVLSSAF) form a helical membrane-spanning segment. At 129 to 148 (QLAGGKVAGDIFKDNAILAN) the chain is on the extracellular side. The chain crosses the membrane as a helical span at residues 149-166 (PVAGLVVGILVTVLVQSS). Over 167-168 (ST) the chain is Cytoplasmic. The chain crosses the membrane as a helical span at residues 169 to 188 (ATSIIVSMVSSGLLEVSSAI). Residues 189-350 (PIIMGSNIGT…HIFVDTQLPD (162 aa)) are Extracellular-facing. 2 cysteine pairs are disulfide-bonded: cysteine 228/cysteine 525 and cysteine 309/cysteine 339. N-linked (GlcNAc...) asparagine glycosylation is found at asparagine 301, asparagine 326, and asparagine 333. A helical membrane pass occupies residues 351-373 (LAVGLILLAGSLVLLCTCLILLV). The Cytoplasmic segment spans residues 374-415 (KMLNSLLKGQVAKVIQKVINTDLPAPFTWVTGYFAMVVGAAM). Residues 416–439 (TFIVQSSSVFTSAITPLVGLGVIS) form a helical membrane-spanning segment. Over 440–469 (IERAYPLTLGSNIGTTTTAILAALASPREK) the chain is Extracellular. Residues 470–490 (LSSSFQIALCHFFFNISGILL) form a helical membrane-spanning segment. The Cytoplasmic portion of the chain corresponds to 491–516 (WYPLPCTRLPIRMAKALGKRTAKYRW). Phosphothreonine; by PKC is present on threonine 511. Residues 517–537 (FAVLYLLVCFLLLPSLVFGIS) form a helical membrane-spanning segment. The Extracellular segment spans residues 538–542 (MAGWR). A helical transmembrane segment spans residues 543–564 (AMVGVGAPFGALLAFVVLINVL). Residues 565–642 (QSRSPGRLPK…LPAHHNATRL (78 aa)) are Cytoplasmic-facing. Serine 610 carries the post-translational modification Phosphoserine. At threonine 626 the chain carries Phosphothreonine. Residue serine 628 is modified to Phosphoserine.

It belongs to the SLC34A transporter family. As to quaternary structure, interacts via its C-terminal region with NHERF4. Interacts with NHERF1. Interacts with TMEM174; regulates SLC34A1 internalization by PTH and FGF23. Expressed in the kidney cortex.

It localises to the apical cell membrane. The protein localises to the cell membrane. It catalyses the reaction 3 Na(+)(out) + phosphate(out) = 3 Na(+)(in) + phosphate(in). Its activity is regulated as follows. Transport activity is significantly increased in response to dietary phosphate deprivation. Its function is as follows. Involved in actively transporting phosphate into cells via Na(+) cotransport in the renal brush border membrane. The cotransport has a Na(+):Pi stoichiometry of 3:1 and is electrogenic. This Oryctolagus cuniculus (Rabbit) protein is Sodium-dependent phosphate transport protein 2A.